A 120-amino-acid polypeptide reads, in one-letter code: Cell division protein FtsL (120 aa).

Topologically, residues 1-36 (MTNLAVKYKQQAQEEVQIQTPPQQMAKPKVKAKITR) are cytoplasmic. A helical transmembrane segment spans residues 37–57 (IEKLLYVAFIGFLLYACVAFI). Residues 58–120 (GNKAGLYQVN…INANNVKGLK (63 aa)) are Extracellular-facing.

The protein belongs to the FtsL family.

It localises to the cell membrane. In terms of biological role, essential cell division protein. This Bacillus cereus (strain ATCC 14579 / DSM 31 / CCUG 7414 / JCM 2152 / NBRC 15305 / NCIMB 9373 / NCTC 2599 / NRRL B-3711) protein is Cell division protein FtsL.